Consider the following 1301-residue polypeptide: Zinc finger protein 532 (1301 aa).

3 disordered regions span residues proline 26–glutamate 206, alanine 223–lysine 266, and lysine 281–isoleucine 366. Residues serine 32–histidine 52 show a composition bias toward basic and acidic residues. Polar residues predominate over residues proline 84–serine 101. The segment covering tyrosine 102–lysine 111 has biased composition (basic and acidic residues). Residues lysine 122–serine 133 are compositionally biased toward polar residues. Phosphoserine occurs at positions 130, 133, and 134. Positions glutamate 136–aspartate 151 are enriched in acidic residues. Positions serine 158 to glutamine 170 are enriched in polar residues. Lysine 175 carries the post-translational modification N6-acetyllysine. Over residues glutamate 182–valine 195 the composition is skewed to polar residues. 2 stretches are compositionally biased toward basic and acidic residues: residues glutamate 196–glutamate 206 and alanine 223–aspartate 250. Position 205 is a phosphothreonine (threonine 205). Serine 252, serine 307, and serine 314 each carry phosphoserine. Residues glutamate 303–proline 315 are compositionally biased toward basic and acidic residues. Positions serine 337 to proline 359 are enriched in low complexity. Serine 434 is subject to Phosphoserine. Glycyl lysine isopeptide (Lys-Gly) (interchain with G-Cter in SUMO2) cross-links involve residues lysine 459 and lysine 516. Residues tyrosine 616 to tyrosine 635 form a C2H2-type 1; degenerate zinc finger. Residues leucine 754–threonine 779 form a C2H2-type 2; degenerate zinc finger. 5 C2H2-type zinc fingers span residues lysine 783 to histidine 805, phenylalanine 842 to histidine 865, tyrosine 870 to histidine 893, tyrosine 905 to histidine 927, and phenylalanine 936 to histidine 959. Lysine 980 participates in a covalent cross-link: Glycyl lysine isopeptide (Lys-Gly) (interchain with G-Cter in SUMO2). Residues threonine 983–threonine 1017 are disordered. Over residues asparagine 990–threonine 1017 the composition is skewed to basic and acidic residues. C2H2-type zinc fingers lie at residues tryptophan 1025–histidine 1048 and histidine 1055–histidine 1078. The C2H2-type 10; degenerate zinc finger occupies tyrosine 1085–histidine 1111. Serine 1140 is subject to Phosphoserine. Residues lysine 1144 and lysine 1167 each participate in a glycyl lysine isopeptide (Lys-Gly) (interchain with G-Cter in SUMO2) cross-link. The C2H2-type 11 zinc finger occupies tyrosine 1203 to histidine 1226. Positions glutamate 1230–aspartate 1263 are disordered. The C2H2-type 12 zinc finger occupies arginine 1264–histidine 1286.

Belongs to the krueppel C2H2-type zinc-finger protein family.

The protein localises to the nucleus. Its function is as follows. May be involved in transcriptional regulation. The sequence is that of Zinc finger protein 532 (ZNF532) from Homo sapiens (Human).